A 770-amino-acid polypeptide reads, in one-letter code: Amyloid-beta precursor protein (770 aa).

Positions 1-17 (MLPGLALLLLAAWTARA) are cleaved as a signal peptide. Residues 18-701 (LEVPTDGNAG…AEDVGSNKGA (684 aa)) lie on the Extracellular side of the membrane. Residues 28–123 (LLAEPQIAMF…PYRCLVGEFV (96 aa)) are GFLD subdomain. Residues 28 to 189 (LLAEPQIAMF…RGVEFVCCPL (162 aa)) form the E1 domain. Disulfide bonds link cysteine 38–cysteine 62, cysteine 73–cysteine 117, cysteine 98–cysteine 105, cysteine 133–cysteine 187, cysteine 144–cysteine 174, and cysteine 158–cysteine 186. A heparin-binding site is contributed by 96–110 (NWCKRGRKQCKTHPH). Positions 131–189 (DKCKFLHQERMDVCETHLHWHTVAKETCSEKSTNLHDYGMLLPCGIDKFRGVEFVCCPL) are cuBD subdomain. Residues histidine 147, histidine 151, and tyrosine 168 each coordinate Cu(2+). The interval 181–188 (GVEFVCCP) is zinc-binding. Zn(2+)-binding residues include glutamate 183, cysteine 186, and cysteine 187. Over residues 194–207 (DNVDSADAEEDDSD) the composition is skewed to acidic residues. Residues 194 to 284 (DNVDSADAEE…TTTTTTESVE (91 aa)) form a disordered region. Residue serine 198 is modified to Phosphoserine; by CK2. Residue serine 206 is modified to Phosphoserine; by CK1. Tyrosine 217 and tyrosine 262 each carry sulfotyrosine. Positions 228–264 (VAEEEEVAEVEEEEADDDEDDEDGDEVEEEAEEPYEE) are enriched in acidic residues. The segment covering 268-281 (RTTSIATTTTTTTE) has biased composition (low complexity). 3 disulfide bridges follow: cysteine 291-cysteine 341, cysteine 300-cysteine 324, and cysteine 316-cysteine 337. Residues 291–341 (CSEQAETGPCRAMISRWYFDVTEGKCAPFFYGGCGGNRNNFDTEEYCMAVC) form the BPTI/Kunitz inhibitor domain. Residue tyrosine 336 is modified to Sulfotyrosine. The short motif at 344–365 (VMSQSLRKTTREPLTRDPVKLP) is the OX-2 element. An E2 domain is found at 374-565 (AVDKYLETPG…EEIQDEVDEL (192 aa)). A heparin-binding region spans residues 391–423 (FQKAKERLEAKHRERMSQVMREWEEAERQAKNL). At serine 441 the chain carries Phosphoserine. The interval 491 to 522 (FNMLKKYVRAEQKDRQHTLKHFEHVRMVDPKK) is heparin-binding. Tyrosine 497 is subject to Phosphotyrosine. Residues 523–540 (AAQIRSQVMTHLRVIYER) form a collagen-binding region. N-linked (GlcNAc...) asparagine glycans are attached at residues asparagine 542 and asparagine 571. Cu(2+) contacts are provided by histidine 677, tyrosine 681, histidine 684, and histidine 685. Histidine 677, tyrosine 681, histidine 684, and histidine 685 together coordinate Zn(2+). Residues 695–722 (VGSNKGAIIGLMVGGVVIATVIVITLVM) are interaction with PSEN1. A helical transmembrane segment spans residues 702–722 (IIGLMVGGVVIATVIVITLVM). Topologically, residues 723-770 (LKKKQYTSIHHGVVEVDAAVTPEERHLSKMQQNGYENPTYKFFEQMQN) are cytoplasmic. The Basolateral sorting signal signature appears at 724–734 (KKKQYTSIHHG). At threonine 729 the chain carries Phosphothreonine. Phosphoserine; by APP-kinase I is present on serine 730. An interaction with G(o)-alpha region spans residues 732 to 751 (HHGVVEVDAAVTPEERHLSK). Threonine 743 carries the post-translational modification Phosphothreonine; by CDK5 and MAPK10. Positions 756-770 (GYENPTYKFFEQMQN) are required for the interaction with KIF5B and for anterograde transport in axons. Position 757 is a phosphotyrosine; by ABL1 (tyrosine 757). The YENPXY motif; contains endocytosis signal signature appears at 757–762 (YENPTY). Lysine 763 is covalently cross-linked (Glycyl lysine isopeptide (Lys-Gly) (interchain with G-Cter in ubiquitin)).

The protein belongs to the APP family. In terms of assembly, binds, via its C-terminus, to the PID domain of several cytoplasmic proteins, including APBB family members, the APBA family, MAPK8IP1, SHC1 and NUMB and DAB1. Binding to DAB1 inhibits its serine phosphorylation. Interacts (via NPXY motif) with DAB2 (via PID domain); the interaction is impaired by tyrosine phosphorylation of the NPXY motif. Also interacts with GPCR-like protein BPP, APPBP1, IB1, KNS2 (via its TPR domains), APPBP2 (via BaSS) and DDB1. In vitro, it binds MAPT via the MT-binding domains. Associates with microtubules in the presence of ATP and in a kinesin-dependent manner. Interacts, through a C-terminal domain, with GNAO1. Amyloid-beta protein 42 binds CHRNA7 in hippocampal neurons. Amyloid-beta associates with HADH2. Interacts with CPEB1, ANKS1B and AGER. Interacts with ITM2B. Interacts with ITM2C. Interacts with IDE. Can form homodimers; dimerization is enhanced in the presence of Cu(2+) ions. Can form homodimers; this is promoted by heparin binding. Amyloid-beta protein 40 interacts with S100A9. CTF-alpha product of APP interacts with GSAP. Isoform APP695 interacts with SORL1 (via N-terminal ectodomain); this interaction retains APP in the trans-Golgi network and reduces processing into soluble APP-alpha and amyloid-beta peptides. Isoform APP770 interacts with SORL1. The C99 fragment also interacts with SORL1. Interacts with PLD3. Interacts with VDAC1. Interacts with NSG1; could regulate APP processing. Amyloid-beta protein 42 interacts with FPR2. Interacts (via transmembrane region) with PSEN1; the interaction is direct. Interacts with LRRK2. Interacts (via cytoplasmic domain) with KIF5B. Interacts (via C-terminus) with APBB2/FE65L1 (via C-terminus). Interacts (via intracellular domain) with APBB3. In terms of processing, proteolytically processed under normal cellular conditions. Cleavage either by alpha-secretase, beta-secretase or theta-secretase leads to generation and extracellular release of soluble APP peptides, S-APP-alpha and S-APP-beta, and the retention of corresponding membrane-anchored C-terminal fragments, C80, C83 and C99. Subsequent processing of C80 and C83 by gamma-secretase yields P3 peptides. This is the major secretory pathway and is non-amyloidogenic. Alternatively, presenilin/nicastrin-mediated gamma-secretase processing of C99 releases the amyloid-beta proteins, amyloid-beta protein 40 and amyloid-beta protein 42, major components of amyloid plaques, and the cytotoxic C-terminal fragments, gamma-CTF(50), gamma-CTF(57) and gamma-CTF(59). PSEN1 cleavage is more efficient with C83 than with C99 as substrate (in vitro). Amyloid-beta protein 40 and Amyloid-beta protein 42 are cleaved by ACE. Many other minor amyloid-beta peptides, amyloid-beta 1-X peptides, are found in cerebral spinal fluid (CSF) including the amyloid-beta X-15 peptides, produced from the cleavage by alpha-secretase. Proteolytically cleaved by caspases during neuronal apoptosis. Cleavage at Asp-739 by either caspase-3, -8 or -9 results in the production of the neurotoxic C31 peptide and the increased production of amyloid-beta peptides. Post-translationally, N- and O-glycosylated. In terms of processing, phosphorylation in the C-terminal on tyrosine, threonine and serine residues is neuron-specific. Phosphorylation can affect APP processing, neuronal differentiation and interaction with other proteins. Phosphorylated on Thr-743 in neuronal cells by Cdc5 kinase and Mapk10, in dividing cells by Cdc2 kinase in a cell-cycle dependent manner with maximal levels at the G2/M phase and, in vitro, by GSK-3-beta. The Thr-743 phosphorylated form causes a conformational change which reduces binding of Fe65 family members. In dopaminergic (DA) neurons, phosphorylation on Thr-743 by LRKK2 promotes the production and the nuclear translocation of the APP intracellular domain (AICD) which induces DA neuron apoptosis. Phosphorylation on Tyr-757 is required for SHC binding. Phosphorylated in the extracellular domain by casein kinases on both soluble and membrane-bound APP. This phosphorylation is inhibited by heparin. Trophic-factor deprivation triggers the cleavage of surface APP by beta-secretase to release sAPP-beta which is further cleaved to release an N-terminal fragment of APP (N-APP). Post-translationally, amyloid-beta peptides are degraded by IDE. In terms of processing, sulfated on tyrosine residues.

The protein localises to the cell membrane. Its subcellular location is the membrane. It localises to the perikaryon. The protein resides in the cell projection. It is found in the growth cone. The protein localises to the clathrin-coated pit. Its subcellular location is the early endosome. It localises to the cytoplasmic vesicle. The protein resides in the endoplasmic reticulum. It is found in the golgi apparatus. The protein localises to the secreted. Its subcellular location is the cell surface. It localises to the nucleus. The protein resides in the cytoplasm. Its function is as follows. Functions as a cell surface receptor and performs physiological functions on the surface of neurons relevant to neurite growth, neuronal adhesion and axonogenesis. Interaction between APP molecules on neighboring cells promotes synaptogenesis. Involved in cell mobility and transcription regulation through protein-protein interactions. Can promote transcription activation through binding to APBB1-KAT5 and inhibit Notch signaling through interaction with Numb. Couples to apoptosis-inducing pathways such as those mediated by G(o) and JIP. Inhibits G(o)-alpha ATPase activity. Acts as a kinesin I membrane receptor, mediating the axonal transport of beta-secretase and presenilin 1. By acting as a kinesin I membrane receptor, plays a role in axonal anterograde transport of cargo towards synapses in axons. May be involved in copper homeostasis/oxidative stress through copper ion reduction. In vitro, copper-metallated APP induces neuronal death directly or is potentiated through Cu(2+)-mediated low-density lipoprotein oxidation. Can regulate neurite outgrowth through binding to components of the extracellular matrix such as heparin and collagen I and IV. Induces a AGER-dependent pathway that involves activation of p38 MAPK, resulting in internalization of amyloid-beta peptide and mitochondrial dysfunction in cultured cortical neurons. Provides Cu(2+) ions for GPC1 which are required for release of nitric oxide (NO) and subsequent degradation of the heparan sulfate chains on GPC1. Amyloid-beta peptides are lipophilic metal chelators with metal-reducing activity. Binds transient metals such as copper, zinc and iron. In terms of biological role, the gamma-CTF peptides as well as the caspase-cleaved peptides, including C31, are potent enhancers of neuronal apoptosis. This chain is Amyloid-beta precursor protein, found in Macaca fascicularis (Crab-eating macaque).